Consider the following 98-residue polypeptide: MNQSAVLIFCLIFLTLNGTQGIPLSRTIRCTCIKISDQPVNLRSLEKIEMIPASPSCPHVEIIATMKKSGEKRCLNPESKTIKSLVKAISKKRSRRSP.

A signal peptide spans 1–21 (MNQSAVLIFCLIFLTLNGTQG). Citrulline is present on Arg-26. Cystine bridges form between Cys-30–Cys-57 and Cys-32–Cys-74.

It belongs to the intercrine alpha (chemokine CxC) family. In terms of assembly, monomer, dimer, and tetramer. Interacts with CXCR3 (via N-terminus).

The protein resides in the secreted. Functionally, pro-inflammatory cytokine that is involved in a wide variety of processes such as chemotaxis, differentiation, and activation of peripheral immune cells, regulation of cell growth, apoptosis and modulation of angiostatic effects. Plays thereby an important role during viral infections by stimulating the activation and migration of immune cells to the infected sites. Mechanistically, binding of CXCL10 to the CXCR3 receptor activates G protein-mediated signaling and results in downstream activation of phospholipase C-dependent pathway, an increase in intracellular calcium production and actin reorganization. In turn, recruitment of activated Th1 lymphocytes occurs at sites of inflammation. Activation of the CXCL10/CXCR3 axis also plays an important role in neurons in response to brain injury for activating microglia, the resident macrophage population of the central nervous system, and directing them to the lesion site. This recruitment is an essential element for neuronal reorganization. This Canis lupus familiaris (Dog) protein is C-X-C motif chemokine 10 (CXCL10).